The primary structure comprises 252 residues: Indole-3-glycerol phosphate synthase (252 aa).

Belongs to the TrpC family.

The catalysed reaction is 1-(2-carboxyphenylamino)-1-deoxy-D-ribulose 5-phosphate + H(+) = (1S,2R)-1-C-(indol-3-yl)glycerol 3-phosphate + CO2 + H2O. It participates in amino-acid biosynthesis; L-tryptophan biosynthesis; L-tryptophan from chorismate: step 4/5. The chain is Indole-3-glycerol phosphate synthase from Listeria monocytogenes serovar 1/2a (strain ATCC BAA-679 / EGD-e).